A 471-amino-acid polypeptide reads, in one-letter code: Isochorismate synthase MenF (471 aa).

Residue lysine 226 is the Proton acceptor of the active site. The active-site Proton donor is the glutamate 275. Residues glutamate 319 and glutamate 454 each contribute to the Mg(2+) site.

The protein belongs to the isochorismate synthase family. Mg(2+) serves as cofactor.

The catalysed reaction is chorismate = isochorismate. It participates in quinol/quinone metabolism; 1,4-dihydroxy-2-naphthoate biosynthesis; 1,4-dihydroxy-2-naphthoate from chorismate: step 1/7. The protein operates within quinol/quinone metabolism; menaquinone biosynthesis. In terms of biological role, catalyzes the conversion of chorismate to isochorismate. The sequence is that of Isochorismate synthase MenF from Bacillus subtilis (strain 168).